The following is a 539-amino-acid chain: Nucleoporin NUP60 (539 aa).

A phosphoserine mark is found at Ser-10, Ser-49, Ser-81, and Ser-89. Residues 44-80 are disordered; that stretch reads DSARVSPRNNVANKQPRNESFNRRISSMPGGYFHSEI. A coiled-coil region spans residues 91–118; the sequence is VVSAVGEARNDIENKEEEYDETHETNIS. Phosphoserine occurs at positions 162, 171, 214, and 222. Polar residues-rich tracts occupy residues 242–252 and 258–267; these read TANTSAQSIAS and SGVSKSAPSK. 3 disordered regions span residues 242-267, 305-329, and 347-493; these read TANTSAQSIASAKSVRSGVSKSAPSK, IRKHKRVSPNAAPRQEISEEETTVK, and NATK…GKHI. Over residues 347–359 the composition is skewed to polar residues; sequence NATKISPSAPSKD. Ser-352, Ser-360, Ser-374, and Ser-382 each carry phosphoserine. Polar residues-rich tracts occupy residues 395–433 and 448–485; these read SAFNFSFNTSRNVEPTENAYKSENAPSASSKEFNFTNLQ and GDSTPVQPDLSVTPQKSSSKGFVFNSVQKKSRSNLSQE. FXF repeat units follow at residues 399 to 401 and 427 to 429; these read FSF and FNF. Position 460 is a phosphothreonine (Thr-460). The FXF 3 repeat unit spans residues 469 to 471; the sequence is FVF. 2 positions are modified to phosphoserine: Ser-480 and Ser-483. The FXF 4 repeat unit spans residues 509–511; the sequence is FDF.

In terms of assembly, component of the nuclear pore complex (NPC). NPC constitutes the exclusive means of nucleocytoplasmic transport. NPCs allow the passive diffusion of ions and small molecules and the active, nuclear transport receptor-mediated bidirectional transport of macromolecules such as proteins, RNAs, ribonucleoparticles (RNPs), and ribosomal subunits across the nuclear envelope. Due to its 8-fold rotational symmetry, all subunits are present with 8 copies or multiples thereof. Binds to NUP1 and NUP2 forming the nuclear basket and the distal ring. The interaction with NUP2 is GSP1-GTP-dependent. Interacts through its FG repeats with karyopherins, such as KAP123 and KAP95-SRP1 (KAP60). Also interacts with GSP1-GTP and SRM1 (PRP20), where NUP60 reduces SRM1 activity, thus inhibiting GSP1 guanine nucleotide dissociation. Post-translationally, phosphorylated by CDC28.

Its subcellular location is the nucleus. The protein resides in the nuclear pore complex. The protein localises to the nucleus membrane. Functions as a component of the nuclear pore complex (NPC). NPC components, collectively referred to as nucleoporins (NUPs), can play the role of both NPC structural components and of docking or interaction partners for transiently associated nuclear transport factors. Active directional transport is assured by both, a Phe-Gly (FG) repeat affinity gradient for these transport factors across the NPC and a transport cofactor concentration gradient across the nuclear envelope (GSP1 and GSP2 GTPases associated predominantly with GTP in the nucleus, with GDP in the cytoplasm). The chain is Nucleoporin NUP60 (NUP60) from Saccharomyces cerevisiae (strain ATCC 204508 / S288c) (Baker's yeast).